Reading from the N-terminus, the 142-residue chain is Photosystem II extrinsic protein U (142 aa).

The N-terminal stretch at 1–29 (MKGLVRLLTVFSLLLGCWGWLGTTQIAQA) is a signal peptide.

The protein belongs to the PsbU family. As to quaternary structure, PSII is composed of 1 copy each of membrane proteins PsbA, PsbB, PsbC, PsbD, PsbE, PsbF, PsbH, PsbI, PsbJ, PsbK, PsbL, PsbM, PsbT, PsbX, PsbY, PsbZ, Psb30/Ycf12, peripheral proteins PsbO, CyanoQ (PsbQ), PsbU, PsbV and a large number of cofactors. It forms dimeric complexes.

The protein resides in the cellular thylakoid membrane. Functionally, one of the extrinsic, lumenal subunits of photosystem II (PSII). PSII is a light-driven water plastoquinone oxidoreductase, using light energy to abstract electrons from H(2)O, generating a proton gradient subsequently used for ATP formation. The extrinsic proteins stabilize the structure of photosystem II oxygen-evolving complex (OEC), the ion environment of oxygen evolution and protect the OEC against heat-induced inactivation. This chain is Photosystem II extrinsic protein U, found in Nostoc sp. (strain PCC 7120 / SAG 25.82 / UTEX 2576).